The primary structure comprises 305 residues: Serine/threonine-protein kinase 16 (305 aa).

Gly2 carries the N-myristoyl glycine lipid modification. S-palmitoyl cysteine attachment occurs at residues Cys6 and Cys8. In terms of domain architecture, Protein kinase spans 20–293 (YLFVQKLGEG…PVLLSQLEAL (274 aa)). Residues 26–34 (LGEGGFSYV) and Lys49 each bind ATP. Catalysis depends on Asp148, which acts as the Proton acceptor. Residues 166–202 (DLGSMNQACIQVEGSRQALALQDWAAQRCTISYRAPE) are activation loop. Residue Ser197 is modified to Phosphoserine; by autocatalysis. Tyr198 is modified (phosphotyrosine; by autocatalysis).

Belongs to the protein kinase superfamily. Ser/Thr protein kinase family. In terms of assembly, monomer. Interacts with DRG1 (via its N-terminal); the interaction phosphorylates DRG1. Post-translationally, mainly autophosphorylated on serine/threonine residues. Also autophosphorylated on Tyr-198. Expressed in heart, liver, brain, spleen, lung, skeletal muscle, kidney and testis.

Its subcellular location is the cytoplasm. It is found in the perinuclear region. The protein resides in the membrane. It carries out the reaction L-seryl-[protein] + ATP = O-phospho-L-seryl-[protein] + ADP + H(+). It catalyses the reaction L-threonyl-[protein] + ATP = O-phospho-L-threonyl-[protein] + ADP + H(+). The catalysed reaction is L-tyrosyl-[protein] + ATP = O-phospho-L-tyrosyl-[protein] + ADP + H(+). In terms of biological role, membrane-associated protein kinase that phosphorylates on serine and threonine residues. In vitro substrates include DRG1, ENO1 and EIF4EBP1. Also autophosphorylates. May be involved in secretory vesicle trafficking or intracellular signaling. May have a role in regulating stromal-epithelial interactions that occur during ductal morphogenesis in the mammary gland. May be involved in TGF-beta signaling. Able to autophosphorylate on Tyr residue; it is however unclear whether it has tyrosine-protein kinase toward other proteins. The polypeptide is Serine/threonine-protein kinase 16 (Stk16) (Rattus norvegicus (Rat)).